A 118-amino-acid polypeptide reads, in one-letter code: Cell division topological specificity factor (118 aa).

A disordered region spans residues 86–118 (RSQAKAVSSQENGASSQEAVSSQESVSTPGAME). A compositionally biased stretch (low complexity) spans 99 to 112 (ASSQEAVSSQESVS).

The protein belongs to the MinE family.

Prevents the cell division inhibition by proteins MinC and MinD at internal division sites while permitting inhibition at polar sites. This ensures cell division at the proper site by restricting the formation of a division septum at the midpoint of the long axis of the cell. The protein is Cell division topological specificity factor of Prochlorococcus marinus (strain MIT 9313).